The sequence spans 508 residues: Beta-glucosidase 10 (508 aa).

The N-terminal stretch at 1–22 (MKLYSLLSVFLVILLATSDSDA) is a signal peptide. A beta-D-glucoside is bound by residues glutamine 42, histidine 142, and 187 to 188 (NE). The active-site Proton donor is glutamate 188. A disulfide bridge links cysteine 207 with cysteine 215. 2 N-linked (GlcNAc...) asparagine glycosylation sites follow: asparagine 214 and asparagine 219. A beta-D-glucoside is bound at residue tyrosine 331. An N-linked (GlcNAc...) asparagine glycan is attached at asparagine 365. A beta-D-glucoside is bound at residue glutamate 398. The active-site Nucleophile is the glutamate 398. Residue asparagine 431 is glycosylated (N-linked (GlcNAc...) asparagine). Residues tryptophan 441 and phenylalanine 457 each coordinate a beta-D-glucoside. N-linked (GlcNAc...) asparagine glycosylation is found at asparagine 463, asparagine 485, and asparagine 501.

Belongs to the glycosyl hydrolase 1 family.

The enzyme catalyses Hydrolysis of terminal, non-reducing beta-D-glucosyl residues with release of beta-D-glucose.. This chain is Beta-glucosidase 10, found in Arabidopsis thaliana (Mouse-ear cress).